Here is a 185-residue protein sequence, read N- to C-terminus: Threonylcarbamoyl-AMP synthase (185 aa).

One can recognise a YrdC-like domain in the interval 1–185 (MKNLNQVVDA…AKTGNTLRQG (185 aa)).

This sequence belongs to the SUA5 family. TsaC subfamily.

It localises to the cytoplasm. It catalyses the reaction L-threonine + hydrogencarbonate + ATP = L-threonylcarbamoyladenylate + diphosphate + H2O. In terms of biological role, required for the formation of a threonylcarbamoyl group on adenosine at position 37 (t(6)A37) in tRNAs that read codons beginning with adenine. Catalyzes the conversion of L-threonine, HCO(3)(-)/CO(2) and ATP to give threonylcarbamoyl-AMP (TC-AMP) as the acyladenylate intermediate, with the release of diphosphate. The chain is Threonylcarbamoyl-AMP synthase from Aliivibrio fischeri (strain ATCC 700601 / ES114) (Vibrio fischeri).